The chain runs to 410 residues: Arginine deiminase (410 aa).

The active-site Amidino-cysteine intermediate is cysteine 400.

This sequence belongs to the arginine deiminase family.

It localises to the cytoplasm. The enzyme catalyses L-arginine + H2O = L-citrulline + NH4(+). The protein operates within amino-acid degradation; L-arginine degradation via ADI pathway; carbamoyl phosphate from L-arginine: step 1/2. The sequence is that of Arginine deiminase from Bacillus cereus (strain G9842).